A 121-amino-acid polypeptide reads, in one-letter code: Amelogenin (121 aa).

2 disordered regions span residues 1–20 and 32–121; these read LHHQIIPVLSQQQTPTHALQ and QPMQ…WPAT. The segment covering 48–58 has biased composition (polar residues); it reads SVTPTQHHQSN. The segment covering 59 to 71 has biased composition (low complexity); that stretch reads LPQPAQQPFQPQV. A compositionally biased stretch (pro residues) spans 85–111; that stretch reads PAHPMPPMPQPPLPPMFPMQPLPPLLP.

It belongs to the amelogenin family.

The protein resides in the secreted. It is found in the extracellular space. Its subcellular location is the extracellular matrix. Its function is as follows. Plays a role in the biomineralization of teeth. Seems to regulate the formation of crystallites during the secretory stage of tooth enamel development. Thought to play a major role in the structural organization and mineralization of developing enamel. This is Amelogenin (AMEL) from Ornithorhynchus anatinus (Duckbill platypus).